The following is a 111-amino-acid chain: uncharacterized protein (111 aa).

The tract at residues 1-26 (MDLKDGVEEEEGAGENGKGGTHAQRV) is disordered.

This is an uncharacterized protein from Caenorhabditis elegans.